A 176-amino-acid chain; its full sequence is Mitochondrial inner membrane protein Mpv17 (176 aa).

4 consecutive transmembrane segments (helical) span residues 18–38 (VQVLTAGSLMGVGDMISQQLV), 53–73 (TMVSLGCGFVGPVVGGWYKVL), 94–114 (GGFAPCFLGCFLPLVGILNGM), and 131–151 (LITNYYLWPAVQLANFYLVPL).

The protein belongs to the peroxisomal membrane protein PXMP2/4 family. High levels in heart, kidney, and brain, intermediate levels in testis, and low levels in liver and spleen.

The protein resides in the mitochondrion inner membrane. Non-selective channel that modulates the membrane potential under normal conditions and oxidative stress, and is involved in mitochondrial homeostasis. Involved in mitochondrial deoxynucleoside triphosphates (dNTP) pool homeostasis and mitochondrial DNA (mtDNA) maintenance. May be involved in the regulation of reactive oxygen species metabolism and the control of oxidative phosphorylation. This Mus musculus (Mouse) protein is Mitochondrial inner membrane protein Mpv17.